The primary structure comprises 274 residues: 2,3,4,5-tetrahydropyridine-2,6-dicarboxylate N-succinyltransferase (274 aa).

Substrate is bound by residues Arg-106 and Asp-143.

The protein belongs to the transferase hexapeptide repeat family. Homotrimer.

It localises to the cytoplasm. The catalysed reaction is (S)-2,3,4,5-tetrahydrodipicolinate + succinyl-CoA + H2O = (S)-2-succinylamino-6-oxoheptanedioate + CoA. The protein operates within amino-acid biosynthesis; L-lysine biosynthesis via DAP pathway; LL-2,6-diaminopimelate from (S)-tetrahydrodipicolinate (succinylase route): step 1/3. This chain is 2,3,4,5-tetrahydropyridine-2,6-dicarboxylate N-succinyltransferase, found in Albidiferax ferrireducens (strain ATCC BAA-621 / DSM 15236 / T118) (Rhodoferax ferrireducens).